The primary structure comprises 122 residues: Large ribosomal subunit protein bL12 (122 aa).

Belongs to the bacterial ribosomal protein bL12 family. As to quaternary structure, homodimer. Part of the ribosomal stalk of the 50S ribosomal subunit. Forms a multimeric L10(L12)X complex, where L10 forms an elongated spine to which 2 to 4 L12 dimers bind in a sequential fashion. Binds GTP-bound translation factors.

Functionally, forms part of the ribosomal stalk which helps the ribosome interact with GTP-bound translation factors. Is thus essential for accurate translation. The polypeptide is Large ribosomal subunit protein bL12 (Staphylococcus saprophyticus subsp. saprophyticus (strain ATCC 15305 / DSM 20229 / NCIMB 8711 / NCTC 7292 / S-41)).